A 548-amino-acid chain; its full sequence is Sesquiterpene synthase 9 (548 aa).

Positions 300, 304, and 453 each coordinate Mg(2+). The short motif at 300–304 (DDTFD) is the DDXXD motif element.

Belongs to the terpene synthase family. Tpsa subfamily. Requires Mg(2+) as cofactor. Mn(2+) is required as a cofactor. Mostly expressed in stem and trichomes, to a lower extent in roots, leaves and flowers and, at low levels, in fruits.

Its subcellular location is the cytoplasm. The enzyme catalyses (2E,6E)-farnesyl diphosphate = germacrene C + diphosphate. It carries out the reaction (2E)-geranyl diphosphate = terpinolene + diphosphate. The catalysed reaction is (2E)-geranyl diphosphate = limonene + diphosphate. It catalyses the reaction (2E)-geranyl diphosphate = beta-myrcene + diphosphate. The enzyme catalyses (2Z,6Z)-farnesyl diphosphate = germacrene C + diphosphate. It functions in the pathway secondary metabolite biosynthesis; terpenoid biosynthesis. In terms of biological role, involved in the biosynthesis of germacrene C, one of the most abundant sesquiterpene in the leaf oil of tomato. Produces mainly germacrene C, but also smaller amounts of germacrene A, B and D when used with farnesyl diphosphate (FPP) as substrate; able to use both (2E,6E)-farnesyl diphosphate ((EE)-FPP) and (2Z,6Z)-farnesyl diphosphate ((ZZ)-FPP). No or low activity with geranylgeranyl diphosphate (GGPP). Can act with a low efficiency as a monoterpene synthase with geranyl diphosphate (GPP) as substrate, thus producing beta-myrcene, limonene and terpinolene. This Solanum lycopersicum (Tomato) protein is Sesquiterpene synthase 9.